A 134-amino-acid chain; its full sequence is MALYEHVFLARQDVTSQQVESMIEAYKGVIESNGGKVEKTEMWGVKSLAYRIKKNRKAHFTLLNIDAPPAALAEMERQMRISEDILRFLTIRVDALEGEPSAMMQKRDRDERKDRERGRRRDDDGYVGERNEEG.

Residues 99-134 (EPSAMMQKRDRDERKDRERGRRRDDDGYVGERNEEG) form a disordered region. Positions 105–134 (QKRDRDERKDRERGRRRDDDGYVGERNEEG) are enriched in basic and acidic residues.

This sequence belongs to the bacterial ribosomal protein bS6 family.

Binds together with bS18 to 16S ribosomal RNA. The polypeptide is Small ribosomal subunit protein bS6 (Methylobacterium sp. (strain 4-46)).